The primary structure comprises 130 residues: Small ribosomal subunit protein uS9 (130 aa).

It belongs to the universal ribosomal protein uS9 family.

The polypeptide is Small ribosomal subunit protein uS9 (Edwardsiella ictaluri (strain 93-146)).